Consider the following 509-residue polypeptide: Lanosterol 14-alpha demethylase (509 aa).

The helical transmembrane segment at 30–50 (GNLLSMLLIACAFTLSLVYLI) threads the bilayer. Heme is bound at residue Cys-455.

Belongs to the cytochrome P450 family. The cofactor is heme. In terms of processing, ubiquitinated by MARCHF6, leading to proteasomal degradation. Ubiquitously expressed with highest levels in testis, ovary, adrenal, prostate, liver, kidney and lung.

It localises to the endoplasmic reticulum membrane. The protein resides in the microsome membrane. It catalyses the reaction a 14alpha-methyl steroid + 3 reduced [NADPH--hemoprotein reductase] + 3 O2 = a Delta(14) steroid + formate + 3 oxidized [NADPH--hemoprotein reductase] + 4 H2O + 4 H(+). The catalysed reaction is lanosterol + 3 reduced [NADPH--hemoprotein reductase] + 3 O2 = 4,4-dimethyl-5alpha-cholesta-8,14,24-trien-3beta-ol + formate + 3 oxidized [NADPH--hemoprotein reductase] + 4 H2O + 4 H(+). It carries out the reaction 24,25-dihydrolanosterol + 3 reduced [NADPH--hemoprotein reductase] + 3 O2 = 4,4-dimethyl-8,14-cholestadien-3beta-ol + formate + 3 oxidized [NADPH--hemoprotein reductase] + 4 H2O + 4 H(+). The enzyme catalyses a 14alpha-methyl steroid + reduced [NADPH--hemoprotein reductase] + O2 = a 14alpha-hydroxymethyl steroid + oxidized [NADPH--hemoprotein reductase] + H2O + H(+). It catalyses the reaction a 14alpha-hydroxymethyl steroid + reduced [NADPH--hemoprotein reductase] + O2 = a 14alpha-formyl steroid + oxidized [NADPH--hemoprotein reductase] + 2 H2O + H(+). The catalysed reaction is a 14alpha-formyl steroid + reduced [NADPH--hemoprotein reductase] + O2 = a Delta(14) steroid + formate + oxidized [NADPH--hemoprotein reductase] + H2O + 2 H(+). It carries out the reaction lanosterol + reduced [NADPH--hemoprotein reductase] + O2 = 32-hydroxylanosterol + oxidized [NADPH--hemoprotein reductase] + H2O + H(+). The enzyme catalyses 32-hydroxylanosterol + reduced [NADPH--hemoprotein reductase] + O2 = 32-oxolanosterol + oxidized [NADPH--hemoprotein reductase] + 2 H2O + H(+). It catalyses the reaction 32-oxolanosterol + reduced [NADPH--hemoprotein reductase] + O2 = 4,4-dimethyl-5alpha-cholesta-8,14,24-trien-3beta-ol + formate + oxidized [NADPH--hemoprotein reductase] + H2O + 2 H(+). The catalysed reaction is 24,25-dihydrolanosterol + reduced [NADPH--hemoprotein reductase] + O2 = 32-hydroxy-24,25-dihydrolanosterol + oxidized [NADPH--hemoprotein reductase] + H2O + H(+). It carries out the reaction 32-hydroxy-24,25-dihydrolanosterol + reduced [NADPH--hemoprotein reductase] + O2 = 32-oxo-24,25-dihydrolanosterol + oxidized [NADPH--hemoprotein reductase] + 2 H2O + H(+). The enzyme catalyses 32-oxo-24,25-dihydrolanosterol + reduced [NADPH--hemoprotein reductase] + O2 = 4,4-dimethyl-8,14-cholestadien-3beta-ol + formate + oxidized [NADPH--hemoprotein reductase] + H2O + 2 H(+). It functions in the pathway steroid biosynthesis; zymosterol biosynthesis; zymosterol from lanosterol: step 1/6. Inhibited by azalanstat. Inhibited by azole antifungal agents ketoconazole, itraconazole and fluconazole. Functionally, sterol 14alpha-demethylase that plays a critical role in the cholesterol biosynthesis pathway, being cholesterol the major sterol component in mammalian membranes as well as a precursor for bile acid and steroid hormone synthesis. Cytochrome P450 monooxygenase that catalyzes the three-step oxidative removal of the 14alpha-methyl group (C-32) of sterols such as lanosterol (lanosta-8,24-dien-3beta-ol) and 24,25-dihydrolanosterol (DHL) in the form of formate, and converts the sterols to 4,4-dimethyl-5alpha-cholesta-8,14,24-trien-3beta-ol and 4,4-dimethyl-8,14-cholestadien-3beta-ol, respectively, which are intermediates of cholesterol biosynthesis. Can also demethylate substrates not intrinsic to mammals, such as eburicol (24-methylene-24,25-dihydrolanosterol), but at a lower rate than DHL. This Homo sapiens (Human) protein is Lanosterol 14-alpha demethylase.